The following is a 2766-amino-acid chain: PDZ domain-containing protein 2 (2766 aa).

The region spanning 85 to 177 (LSFGNIPVFG…GGFIYLIMLR (93 aa)) is the PDZ 1 domain. Disordered regions lie at residues 189–315 (GNSG…KTGK) and 419–452 (MPGS…KLKS). The segment covering 242 to 254 (TADDPNSELENGA) has biased composition (acidic residues). Over residues 280 to 296 (HLERSEADSEVELRVPK) the composition is skewed to basic and acidic residues. Residues 334 to 419 (KMELLKESDG…MVQLVVASKM (86 aa)) enclose the PDZ 2 domain. Ser-517 carries the post-translational modification Phosphoserine. In terms of domain architecture, PDZ 3 spans 535-621 (IIGLYKEKGK…GLFVLTVRTK (87 aa)). Over residues 627-636 (LTPCSTPTHM) the composition is skewed to polar residues. The tract at residues 627-673 (LTPCSTPTHMSRSSSPSFNTNSGGTPAGGGQEEGGSSSLGRKAPGPK) is disordered. Over residues 637 to 650 (SRSSSPSFNTNSGG) the composition is skewed to low complexity. In terms of domain architecture, PDZ 4 spans 679–764 (EVTLNKEPRV…GPVRLVIGRH (86 aa)). Positions 783–794 (YQESREANSSPG) are enriched in polar residues. 2 disordered regions span residues 783-803 (YQES…KSPS) and 834-853 (AGSE…EDGS). Phosphoserine is present on residues Ser-891 and Ser-895. Disordered stretches follow at residues 915–966 (NGGS…KQEE), 990–1425 (HSIL…PSVL), 1456–1531 (ISLS…CPGT), 1725–1909 (DSQG…LPEQ), 1924–1967 (DTSC…IRQS), 2015–2070 (ERVP…ASQV), 2146–2174 (FSSH…AMGG), 2262–2397 (DRPT…ERRT), 2424–2450 (QLEI…GHAD), and 2465–2496 (TRAY…WATP). Acidic residues predominate over residues 918-927 (SDDEDFDGEG). Positions 1021–1038 (GRKEMSGSRSSPKLEYRV) are enriched in basic and acidic residues. Polar residues-rich tracts occupy residues 1040–1061 (TDTQ…SENL), 1126–1137 (PGDSSVPTNCGP), and 1189–1220 (SETP…SQGI). Composition is skewed to low complexity over residues 1379-1393 (SQPP…SHHA) and 1456-1471 (ISLS…SPSS). At Ser-1767 the chain carries Phosphoserine. The segment covering 1797–1806 (CSPKLKRLNS) has biased composition (basic residues). Residues 1884–1901 (LRTSASDTSIRTFTSPLT) show a composition bias toward polar residues. Low complexity-rich tracts occupy residues 1924–1937 (DTSC…PRSG) and 1947–1963 (SGSA…ALAG). 2 stretches are compositionally biased toward low complexity: residues 2280–2296 (PPIN…GSPS) and 2305–2321 (RSLS…SSLL). Polar residues-rich tracts occupy residues 2322-2347 (PQMT…SNKG) and 2362-2372 (PTSTVSPASPS). In terms of domain architecture, PDZ 5 spans 2550–2634 (FIVLNKKEGS…HKHALMIIKK (85 aa)). The tract at residues 2635–2667 (GNDQPGPSFKQEPPSANGKGPFPRRTLPLEPGA) is disordered. A PDZ 6 domain is found at 2678 to 2763 (CVEVLKTSAG…GPVQLVIRKH (86 aa)).

In terms of assembly, interacts with SCN10A, CTNND2 and PKP4. Post-translationally, a secreted form is produced by caspase-mediated proteolytic cleavage. In terms of tissue distribution, expressed in the heart, liver, brain, spleen, lung, kidney, testis and skeletal muscle.

The protein localises to the nucleus. Its subcellular location is the cytoplasm. It is found in the endoplasmic reticulum. It localises to the cell junction. The protein resides in the secreted. The polypeptide is PDZ domain-containing protein 2 (Pdzd2) (Rattus norvegicus (Rat)).